The chain runs to 227 residues: Cytochrome c oxidase subunit 2 (227 aa).

Over 1-14 (MAYPMQLGFQDATS) the chain is Mitochondrial intermembrane. A helical membrane pass occupies residues 15–45 (PIMEELLHFHDHTLMIVFLISSLVLYIISLM). The Mitochondrial matrix portion of the chain corresponds to 46 to 59 (LTTKLTHTSTMDAQ). The chain crosses the membrane as a helical span at residues 60-87 (EVETVWTILPAIILIMIALPSLRILYMM). Residues 88-227 (DEINNPSLTV…YFEKWSASML (140 aa)) lie on the Mitochondrial intermembrane side of the membrane. Cu cation is bound by residues His-161, Cys-196, Glu-198, Cys-200, His-204, and Met-207. Glu-198 is a binding site for Mg(2+). A Phosphotyrosine modification is found at Tyr-218.

It belongs to the cytochrome c oxidase subunit 2 family. As to quaternary structure, component of the cytochrome c oxidase (complex IV, CIV), a multisubunit enzyme composed of 14 subunits. The complex is composed of a catalytic core of 3 subunits MT-CO1, MT-CO2 and MT-CO3, encoded in the mitochondrial DNA, and 11 supernumerary subunits COX4I, COX5A, COX5B, COX6A, COX6B, COX6C, COX7A, COX7B, COX7C, COX8 and NDUFA4, which are encoded in the nuclear genome. The complex exists as a monomer or a dimer and forms supercomplexes (SCs) in the inner mitochondrial membrane with NADH-ubiquinone oxidoreductase (complex I, CI) and ubiquinol-cytochrome c oxidoreductase (cytochrome b-c1 complex, complex III, CIII), resulting in different assemblies (supercomplex SCI(1)III(2)IV(1) and megacomplex MCI(2)III(2)IV(2)). Found in a complex with TMEM177, COA6, COX18, COX20, SCO1 and SCO2. Interacts with TMEM177 in a COX20-dependent manner. Interacts with COX20. Interacts with COX16. Cu cation serves as cofactor.

Its subcellular location is the mitochondrion inner membrane. The enzyme catalyses 4 Fe(II)-[cytochrome c] + O2 + 8 H(+)(in) = 4 Fe(III)-[cytochrome c] + 2 H2O + 4 H(+)(out). Its function is as follows. Component of the cytochrome c oxidase, the last enzyme in the mitochondrial electron transport chain which drives oxidative phosphorylation. The respiratory chain contains 3 multisubunit complexes succinate dehydrogenase (complex II, CII), ubiquinol-cytochrome c oxidoreductase (cytochrome b-c1 complex, complex III, CIII) and cytochrome c oxidase (complex IV, CIV), that cooperate to transfer electrons derived from NADH and succinate to molecular oxygen, creating an electrochemical gradient over the inner membrane that drives transmembrane transport and the ATP synthase. Cytochrome c oxidase is the component of the respiratory chain that catalyzes the reduction of oxygen to water. Electrons originating from reduced cytochrome c in the intermembrane space (IMS) are transferred via the dinuclear copper A center (CU(A)) of subunit 2 and heme A of subunit 1 to the active site in subunit 1, a binuclear center (BNC) formed by heme A3 and copper B (CU(B)). The BNC reduces molecular oxygen to 2 water molecules using 4 electrons from cytochrome c in the IMS and 4 protons from the mitochondrial matrix. The sequence is that of Cytochrome c oxidase subunit 2 (MT-CO2) from Capra hircus (Goat).